The following is a 253-amino-acid chain: Low affinity immunoglobulin gamma Fc region receptor III-A (253 aa).

The signal sequence occupies residues 1–20 (MGQPLPPVALLLLVSASSRA). Over 21-207 (ADVPKALVLL…ISSSVLPWHQ (187 aa)) the chain is Extracellular. 2 Ig-like C2-type domains span residues 24 to 90 (PKAL…YRCQ) and 99 to 189 (PVQL…VTIT). Intrachain disulfides connect Cys-47/Cys-89 and Cys-128/Cys-172. N-linked (GlcNAc...) asparagine glycosylation is found at Asn-56, Asn-63, Asn-165, and Asn-180. A helical membrane pass occupies residues 208–226 (IAFCLVMGLLLAADTGLYF). The Cytoplasmic segment spans residues 227–253 (SVQRDLRSSQRARKEHTLGWSLGSQDK).

As to quaternary structure, forms a heterooligomeric complex with ITAM-containing signaling subunits FCER1G. Interacts (via transmembrane domain) with signaling subunits; this interaction is a prerequisite for receptor complex expression on the cell surface and intracellular signal transduction. Binds the Fc region of antigen-complexed IgG.

It localises to the cell membrane. In terms of biological role, receptor for the invariable Fc fragment of immunoglobulin gamma (IgG). Optimally activated upon binding of clustered antigen-IgG complexes displayed on cell surfaces, triggers lysis of antibody-coated cells, a process known as antibody-dependent cellular cytotoxicity (ADCC). Does not bind free monomeric IgG, thus avoiding inappropriate effector cell activation in the absence of antigenic trigger. Mediates IgG effector functions on natural killer (NK) cells. Binds antigen-IgG complexes generated upon infection and triggers NK cell-dependent cytokine production and degranulation to limit viral load and propagation. Fc-binding subunit that associates with FCER1G adapter to form functional signaling complexes. Following the engagement of antigen-IgG complexes, triggers phosphorylation of immunoreceptor tyrosine-based activation motif (ITAM)-containing adapters with subsequent activation of phosphatidylinositol 3-kinase signaling and sustained elevation of intracellular calcium that ultimately drive NK cell activation. Mediates enhanced ADCC in response to afucosylated IgGs. The protein is Low affinity immunoglobulin gamma Fc region receptor III-A of Oryctolagus cuniculus (Rabbit).